The sequence spans 159 residues: MPSFDVVSELDKHELTNAVDNAIKELDRRFDLKGKCSFEAKDKSVTLTAEADFMLEQMLDILRSNLVKRKVDSQCMEIKDAYPSGKVVKQDVNFREGIDKDLAKKIVGLIKERKLKVQAAIQGEQVRVTGKKRDDLQEAIALLRGESLGMPLQFTNFRD.

This sequence belongs to the YajQ family.

Nucleotide-binding protein. This chain is Nucleotide-binding protein PLES_47741, found in Pseudomonas aeruginosa (strain LESB58).